We begin with the raw amino-acid sequence, 213 residues long: MTFDKTIPKATIKRLSLYYRIFKRFHSENIEKASSKQIAEAIGIDSATVRRDFSYFGELGRRGFGYDVKKLMNFFADILNDTSTTNVLLVGVGNIGRALLNYRFHERNKMKIAMAFDTDDNEQVGQTTSDGIPIYGISSIKEKLIGTDVQTAILTVPSSKAQEVANILIDAGIKGILCFSPVHLSLPKGVVAQYVDLTSELQTLLYFMNQEQF.

Positions 17–56 (LYYRIFKRFHSENIEKASSKQIAEAIGIDSATVRRDFSYF) form a DNA-binding region, H-T-H motif. 91-96 (GVGNIG) contacts NAD(+).

Belongs to the transcriptional regulatory Rex family. In terms of assembly, homodimer.

It is found in the cytoplasm. Modulates transcription in response to changes in cellular NADH/NAD(+) redox state. The chain is Redox-sensing transcriptional repressor Rex from Streptococcus mutans serotype c (strain ATCC 700610 / UA159).